A 164-amino-acid polypeptide reads, in one-letter code: Cyclic pyranopterin monophosphate synthase (164 aa).

Residues 75–77 (MAH) and 112–113 (ME) contribute to the substrate site. The active site involves Asp-127.

This sequence belongs to the MoaC family. Homohexamer; trimer of dimers.

It carries out the reaction (8S)-3',8-cyclo-7,8-dihydroguanosine 5'-triphosphate = cyclic pyranopterin phosphate + diphosphate. It participates in cofactor biosynthesis; molybdopterin biosynthesis. Its function is as follows. Catalyzes the conversion of (8S)-3',8-cyclo-7,8-dihydroguanosine 5'-triphosphate to cyclic pyranopterin monophosphate (cPMP). This chain is Cyclic pyranopterin monophosphate synthase, found in Desulforamulus reducens (strain ATCC BAA-1160 / DSM 100696 / MI-1) (Desulfotomaculum reducens).